The following is a 356-amino-acid chain: MSAPVIAIDAMGGDFGPHCIVPASLSCLAENPSLHLVLVGQSSLLEQLVAKHPGVDRARLKIVDAPEMVTMDERPAQALRGKPRSSMRVALEQVRDGGAQACVSAGNTGALMALARQVLKTLPGIDRPAMVTALPTRGAPCLLLDLGANVDCPAEQLYQFAVMGAVAAESLGRQQPRVALLNVGTEEIKGNQQVKLAAALLQQAAGLNYRGFIEGDGLYRGEADVVVCDGFVGNILLKSSEGLAGMLVAKVEALFRRSIAARIVGAVALPLLRRLRAELNPAQYNGASFLGLQGIVVKSHGSAGADGFKAAIRRAAQDVEHDLPAQLRDRLGQFFRVDGSSGGTDDVTARDGWPSN.

Belongs to the PlsX family. Homodimer. Probably interacts with PlsY.

The protein resides in the cytoplasm. It carries out the reaction a fatty acyl-[ACP] + phosphate = an acyl phosphate + holo-[ACP]. Its pathway is lipid metabolism; phospholipid metabolism. Its function is as follows. Catalyzes the reversible formation of acyl-phosphate (acyl-PO(4)) from acyl-[acyl-carrier-protein] (acyl-ACP). This enzyme utilizes acyl-ACP as fatty acyl donor, but not acyl-CoA. The chain is Phosphate acyltransferase from Stutzerimonas stutzeri (strain A1501) (Pseudomonas stutzeri).